A 421-amino-acid chain; its full sequence is Acyl-coenzyme A thioesterase 5 (421 aa).

Residues serine 232, aspartate 326, and histidine 360 each act as charge relay system in the active site. Positions 419–421 (AKL) match the Microbody targeting signal motif.

This sequence belongs to the C/M/P thioester hydrolase family. As to expression, highly expressed in spleen, brain, testis and proximal and distal intestine; expressed at low level in the liver.

Its subcellular location is the peroxisome. The enzyme catalyses hexadecanoyl-CoA + H2O = hexadecanoate + CoA + H(+). It carries out the reaction decanoyl-CoA + H2O = decanoate + CoA + H(+). The catalysed reaction is octanoyl-CoA + H2O = octanoate + CoA + H(+). It catalyses the reaction dodecanoyl-CoA + H2O = dodecanoate + CoA + H(+). The enzyme catalyses tetradecanoyl-CoA + H2O = tetradecanoate + CoA + H(+). It carries out the reaction octadecanoyl-CoA + H2O = octadecanoate + CoA + H(+). The catalysed reaction is eicosanoyl-CoA + H2O = eicosanoate + CoA + H(+). It catalyses the reaction (9Z)-octadecenoyl-CoA + H2O = (9Z)-octadecenoate + CoA + H(+). The enzyme catalyses (9Z,12Z)-octadecadienoyl-CoA + H2O = (9Z,12Z)-octadecadienoate + CoA + H(+). It carries out the reaction (5Z,8Z,11Z,14Z)-eicosatetraenoyl-CoA + H2O = (5Z,8Z,11Z,14Z)-eicosatetraenoate + CoA + H(+). The catalysed reaction is (9Z)-hexadecenoyl-CoA + H2O = (9Z)-hexadecenoate + CoA + H(+). The protein operates within lipid metabolism; fatty acid metabolism. Functionally, catalyzes the hydrolysis of acyl-CoAs into free fatty acids and coenzyme A (CoASH), regulating their respective intracellular levels. Mainly active on medium-chain acyl-CoAs. Seems to be involved in intraperoxisomal regulation of acyl-CoA levels, but not CoASH levels. May have a function in termination of beta-oxidation of fatty acids. The sequence is that of Acyl-coenzyme A thioesterase 5 (Acot5) from Mus musculus (Mouse).